Reading from the N-terminus, the 253-residue chain is Probable transcriptional regulatory protein A1G_04400 (253 aa).

The interval 1–21 is disordered; the sequence is MAGHSKFKNIQHRKGAQDKKR.

The protein belongs to the TACO1 family.

The protein resides in the cytoplasm. The protein is Probable transcriptional regulatory protein A1G_04400 of Rickettsia rickettsii (strain Sheila Smith).